We begin with the raw amino-acid sequence, 378 residues long: Erythronate-4-phosphate dehydrogenase (378 aa).

Residues Ser-45 and Thr-66 each coordinate substrate. NAD(+) contacts are provided by Asp-146 and Thr-175. The active site involves Arg-208. Asp-232 lines the NAD(+) pocket. Glu-237 is an active-site residue. Catalysis depends on His-254, which acts as the Proton donor. Gly-257 contributes to the NAD(+) binding site. Position 258 (Tyr-258) interacts with substrate.

Belongs to the D-isomer specific 2-hydroxyacid dehydrogenase family. PdxB subfamily. As to quaternary structure, homodimer.

The protein localises to the cytoplasm. It carries out the reaction 4-phospho-D-erythronate + NAD(+) = (R)-3-hydroxy-2-oxo-4-phosphooxybutanoate + NADH + H(+). It functions in the pathway cofactor biosynthesis; pyridoxine 5'-phosphate biosynthesis; pyridoxine 5'-phosphate from D-erythrose 4-phosphate: step 2/5. In terms of biological role, catalyzes the oxidation of erythronate-4-phosphate to 3-hydroxy-2-oxo-4-phosphonooxybutanoate. The polypeptide is Erythronate-4-phosphate dehydrogenase (Escherichia fergusonii (strain ATCC 35469 / DSM 13698 / CCUG 18766 / IAM 14443 / JCM 21226 / LMG 7866 / NBRC 102419 / NCTC 12128 / CDC 0568-73)).